Reading from the N-terminus, the 273-residue chain is 2,3,4,5-tetrahydropyridine-2,6-dicarboxylate N-succinyltransferase (273 aa).

Substrate contacts are provided by Arg-104 and Asp-141.

It belongs to the transferase hexapeptide repeat family. As to quaternary structure, homotrimer.

It is found in the cytoplasm. It catalyses the reaction (S)-2,3,4,5-tetrahydrodipicolinate + succinyl-CoA + H2O = (S)-2-succinylamino-6-oxoheptanedioate + CoA. Its pathway is amino-acid biosynthesis; L-lysine biosynthesis via DAP pathway; LL-2,6-diaminopimelate from (S)-tetrahydrodipicolinate (succinylase route): step 1/3. This Neisseria meningitidis serogroup B (strain ATCC BAA-335 / MC58) protein is 2,3,4,5-tetrahydropyridine-2,6-dicarboxylate N-succinyltransferase.